The following is an 89-amino-acid chain: uncharacterized protein (89 aa).

The interval 31–89 (TPQPLEPHEHPKPMEPNEFDPKPDDPPRNPDPSPFPNEVPKPKPSDFPIPDELYPQPIV) is disordered. Residues 36–58 (EPHEHPKPMEPNEFDPKPDDPPR) show a composition bias toward basic and acidic residues. Positions 59–69 (NPDPSPFPNEV) are enriched in pro residues.

This is an uncharacterized protein from Dictyostelium discoideum (Social amoeba).